The sequence spans 361 residues: Core-capsid bridging protein (361 aa).

The span at Arg-311–Ser-321 shows a compositional bias: basic residues. Positions Arg-311–Lys-331 are disordered.

It belongs to the adenoviridae core-capsid bridging protein family. As to quaternary structure, monomer. Homodimer. Exists in equilibrium between monomers and dimers in solution. Interacts with the histone-like nucleoprotein; this interactions bridge the virus core to the capsid. Interacts with core protein X; this interactions bridge the virus core to the capsid. Interacts with the endosome lysis protein VI; this interactions bridge the virus core to the capsid. Interacts with the peripentonal hexons. Interacts with host NPM1; this interaction might play a role in virus assembly.

The protein resides in the virion. The protein localises to the host nucleus. It is found in the host nucleolus. Its function is as follows. Associates loosely with the viral DNA to form an outer shell around the nucleoprotein-DNA complex and links it with the capsid by binding the endosome lysis protein. Dissociates from the viral genome during entry. Might be involved in nuclear capsid assembly of the viral particles through its association with NPM1/nucleophosmin. This is Core-capsid bridging protein from Bovine adenovirus 2 (BAdV-2).